The following is a 147-amino-acid chain: Heavy metal-dependent transcription regulator 2 (147 aa).

The HTH merR-type domain maps to 1–69 (MNIGEASKTS…VEQIKELLAL (69 aa)). Residues 3–22 (IGEASKTSGVSSKMIRYYEQ) constitute a DNA-binding region (H-T-H motif).

It localises to the cytoplasm. In terms of biological role, transcriptional regulator involved in acid tolerance. Binds copper. The protein is Heavy metal-dependent transcription regulator 2 (hmrR2) of Rhizobium meliloti (strain 1021) (Ensifer meliloti).